Reading from the N-terminus, the 404-residue chain is MKLPIYLDYSATTPVDPRVAQKMADCLLVDGNFGNPASRSHVFGWKAEEAVENGRRQVAELINADPREIVWTSGATESDNLAIKGVAHFYQSKGKHIITSKIEHKAVLDTARQLEREGFEVTYLEPGEDGIVTPAQVEAVLRDDTILVSLMHVNNEVGSINDIAAIGELTRSRGVLFHVDAAQSAGKVEIDLQKLKVDLMSFSAHKAYGPKGIGALYVSRKPRVRLEAIIHGGGHERGMRSGTLPTHQIVGMGEAFAIAKQEMAAENQRIKALSDRFFKQVSDLEELYVNGSQTARVPHNLNLSFNYVEGESLLMSLKDIAVSSGSACTSASLEPSYVLRALGRNDELAHSSIRFSFGRFTTEEEVDYAAQKVCEAVNKLRELSPLWDMYKDGVDISKIEWAAH.

Residues 75–76 (AT), Asn-155, Gln-183, and 203–205 (SAH) contribute to the pyridoxal 5'-phosphate site. The residue at position 206 (Lys-206) is an N6-(pyridoxal phosphate)lysine. Thr-243 provides a ligand contact to pyridoxal 5'-phosphate. Catalysis depends on Cys-328, which acts as the Cysteine persulfide intermediate. Position 328 (Cys-328) interacts with [2Fe-2S] cluster.

The protein belongs to the class-V pyridoxal-phosphate-dependent aminotransferase family. NifS/IscS subfamily. In terms of assembly, homodimer. Forms a heterotetramer with IscU, interacts with other sulfur acceptors. Requires pyridoxal 5'-phosphate as cofactor.

It is found in the cytoplasm. The catalysed reaction is (sulfur carrier)-H + L-cysteine = (sulfur carrier)-SH + L-alanine. Its pathway is cofactor biosynthesis; iron-sulfur cluster biosynthesis. In terms of biological role, master enzyme that delivers sulfur to a number of partners involved in Fe-S cluster assembly, tRNA modification or cofactor biosynthesis. Catalyzes the removal of elemental sulfur atoms from cysteine to produce alanine. Functions as a sulfur delivery protein for Fe-S cluster synthesis onto IscU, an Fe-S scaffold assembly protein, as well as other S acceptor proteins. This chain is Cysteine desulfurase IscS, found in Pseudomonas putida (strain W619).